The following is a 436-amino-acid chain: F-box/LRR-repeat protein At2g40920 (436 aa).

One can recognise an F-box domain in the interval 48–98; it reads EYLLQNFDLDHVMEILMRFPLTSLTRFKCVSKQWSSLISSRYFCNLLYTTV. LRR repeat units lie at residues 276 to 301 and 393 to 416; these read NCVV…IHLD and YYNL…WFDK.

In Arabidopsis thaliana (Mouse-ear cress), this protein is F-box/LRR-repeat protein At2g40920.